The primary structure comprises 339 residues: DNA-directed RNA polymerase RPB7 homolog (339 aa).

This sequence belongs to the Asfivirus DNA-directed RNA polymerase RPB7 homolog family. Part of the viral DNA-directed RNA polymerase that consists of 8 polII-like subunits (RPB1, RPB2, RPB3, RPB5, RPB6, RPB7, RPB9, RPB10), a capping enzyme and a termination factor.

The protein resides in the host cytoplasm. Its subcellular location is the virion. Functionally, component of the DNA-directed RNA polymerase (RNAP) that catalyzes the transcription in the cytoplasm of viral DNA into RNA using the four ribonucleoside triphosphates as substrates. This African swine fever virus (strain Badajoz 1971 Vero-adapted) (Ba71V) protein is DNA-directed RNA polymerase RPB7 homolog.